The primary structure comprises 342 residues: Biotin synthase (342 aa).

The 228-residue stretch at 63 to 290 (NTVQLSTLLS…GAMVRLSAGR (228 aa)) folds into the Radical SAM core domain. Residues cysteine 78, cysteine 82, and cysteine 85 each coordinate [4Fe-4S] cluster. Residues cysteine 122, cysteine 153, cysteine 213, and arginine 285 each coordinate [2Fe-2S] cluster.

Belongs to the radical SAM superfamily. Biotin synthase family. Homodimer. [4Fe-4S] cluster serves as cofactor. It depends on [2Fe-2S] cluster as a cofactor.

The catalysed reaction is (4R,5S)-dethiobiotin + (sulfur carrier)-SH + 2 reduced [2Fe-2S]-[ferredoxin] + 2 S-adenosyl-L-methionine = (sulfur carrier)-H + biotin + 2 5'-deoxyadenosine + 2 L-methionine + 2 oxidized [2Fe-2S]-[ferredoxin]. Its pathway is cofactor biosynthesis; biotin biosynthesis; biotin from 7,8-diaminononanoate: step 2/2. In terms of biological role, catalyzes the conversion of dethiobiotin (DTB) to biotin by the insertion of a sulfur atom into dethiobiotin via a radical-based mechanism. The chain is Biotin synthase from Cupriavidus pinatubonensis (strain JMP 134 / LMG 1197) (Cupriavidus necator (strain JMP 134)).